The primary structure comprises 326 residues: Vitamin B12 import system permease protein BtuC (326 aa).

The next 9 membrane-spanning stretches (helical) occupy residues 19–39 (LSVL…LWIL), 61–81 (LAVL…QALF), 88–108 (PGLL…VLLG), 112–132 (LPNW…TLIL), 146–166 (LLAG…AIYF), 184–204 (GGVD…LLWI), 240–260 (GWMV…GLVI), 274–294 (VLLP…DIVA), and 302–322 (ELPI…WLLL).

Belongs to the binding-protein-dependent transport system permease family. FecCD subfamily. In terms of assembly, the complex is composed of two ATP-binding proteins (BtuD), two transmembrane proteins (BtuC) and a solute-binding protein (BtuF).

It localises to the cell inner membrane. Part of the ABC transporter complex BtuCDF involved in vitamin B12 import. Involved in the translocation of the substrate across the membrane. The chain is Vitamin B12 import system permease protein BtuC from Escherichia coli O127:H6 (strain E2348/69 / EPEC).